The chain runs to 155 residues: Ribosomal RNA large subunit methyltransferase H (155 aa).

S-adenosyl-L-methionine-binding positions include Leu72, Gly103, and 122–127 (LSPLTL).

Belongs to the RNA methyltransferase RlmH family. Homodimer.

It is found in the cytoplasm. The catalysed reaction is pseudouridine(1915) in 23S rRNA + S-adenosyl-L-methionine = N(3)-methylpseudouridine(1915) in 23S rRNA + S-adenosyl-L-homocysteine + H(+). Functionally, specifically methylates the pseudouridine at position 1915 (m3Psi1915) in 23S rRNA. In Pasteurella multocida (strain Pm70), this protein is Ribosomal RNA large subunit methyltransferase H.